Reading from the N-terminus, the 180-residue chain is High mobility group protein B1 (180 aa).

A Nuclear localization signal (NLS) 1 motif is present at residues 1–8; sequence VNFSEFSK. Positions 1-44 form a DNA-binding region, HMG box 1; sequence VNFSEFSKKCSERWKTMSAKEKGKFEDMAKADKARYEREMKTYI. Lys-8 carries the post-translational modification N6-acetyllysine. Residues Lys-8 and Lys-9 each participate in an isoglutamyl lysine isopeptide (Lys-Gln) (interchain with Q-?) cross-link. Cys-10 is modified (cysteine sulfonic acid (-SO3H)). Lys-33 is covalently cross-linked (Isoglutamyl lysine isopeptide (Lys-Gln) (interchain with Q-?)). The tract at residues 45–61 is LPS binding (Lipid A); sequence PPKGETKKKFKDPNAPK. The tract at residues 54–73 is cytokine-stimulating activity; sequence FKDPNAPKRPPSAFFLFCSE. N6-acetyllysine is present on Lys-55. The HMG box 2 DNA-binding region spans 60–128; that stretch reads PKRPPSAFFL…KYEKDIAAYR (69 aa). Phosphoserine is present on Ser-65. Cys-71 carries the cysteine sulfonic acid (-SO3H) modification. Lys-92, Lys-93, Lys-106, Lys-137, Lys-138, Lys-142, and Lys-145 each carry N6-acetyllysine. A binding to AGER/RAGE region spans residues 115–148; that stretch reads KLKEKYEKDIAAYRAKGKPDAAKKGVVKAEKSKK. Over residues 126–144 the composition is skewed to basic and acidic residues; it reads AYRAKGKPDAAKKGVVKAE. The interval 126–180 is disordered; sequence AYRAKGKPDAAKKGVVKAEKSKKKKEEEDDEEDEEDEEEEEEEEDEDEEEDDDDE. Residues 143-149 carry the Nuclear localization signal (NLS) 2 motif; the sequence is AEKSKKK. The interval 143–149 is NLS 2; sequence AEKSKKK. Lys-145 is covalently cross-linked (Isoglutamyl lysine isopeptide (Lys-Gln) (interchain with Q-?)). Ser-146 is modified (ADP-ribosylserine). Lys-147, Lys-148, Lys-149, and Lys-150 each carry N6-acetyllysine. Isoglutamyl lysine isopeptide (Lys-Gln) (interchain with Q-?) cross-links involve residues Lys-147, Lys-148, and Lys-149. The span at 152-180 shows a compositional bias: acidic residues; it reads EEDDEEDEEDEEEEEEEEDEDEEEDDDDE.

This sequence belongs to the HMGB family. As to quaternary structure, interacts (fully reduced HMGB1) with CXCL12; probably in a 1:2 ratio involving two molecules of CXCL12, each interacting with one HMG box of HMGB1; inhibited by glycyrrhizin. Associates with the TLR4:LY96 receptor complex. Component of the RAG complex composed of core components RAG1 and RAG2, and associated component HMGB1 or HMGB2. Interacts (in cytoplasm upon starvation) with BECN1; inhibits the interaction of BECN1 and BCL2 leading to promotion of autophagy. Interacts with KPNA1; involved in nuclear import. Interacts with SREBF1, TLR2, TLR4, TLR9, PTPRZ1, APEX1, FEN1, POLB, TERT. Interacts with IL1B, AGER, MSH2, XPA, XPC, HNF1A, TP53. Interacts with CD24; the probable CD24:SIGLEC10 complex is proposed to inhibit HGMB1-mediated tissue damage immune response. Interacts with THBD; prevents HGMB1 interaction with ACER/RAGE and inhibits HGMB1 pro-inflammatory activity. Interacts with HAVCR2; impairs HMGB1 binding to B-DNA and likely HMGB1-mediated innate immune response. Interacts with XPO1; mediating nuclear export. Interacts with receptor RAGE/AGER. Post-translationally, phosphorylated at serine residues. Phosphorylation in both NLS regions is required for cytoplasmic translocation followed by secretion. Acetylated on multiple sites upon stimulation with LPS. Acetylation on lysine residues in the nuclear localization signals (NLS 1 and NLS 2) leads to cytoplasmic localization and subsequent secretion. In terms of processing, reduction/oxidation of cysteine residues and a possible intramolecular disulfide bond give rise to different redox forms with specific functional activities in various cellular compartments: 1- fully reduced HMGB1 (HMGB1C23hC45hC106h), 2-disulfide HMGB1 (HMGB1C23-C45C106h) and 3- sulfonyl HMGB1 (HMGB1C23soC45soC106so). Post-translationally, poly-ADP-ribosylated by PARP1 when secreted following stimulation with LPS. In vitro cleavage by CASP1 is liberating a HMG box 1-containing peptide which may mediate immunogenic activity; the peptide antagonizes apoptosis-induced immune tolerance. Can be proteolytically cleaved by a thrombin:thrombomodulin complex; reduces binding to heparin and pro-inflammatory activities. In terms of processing, forms covalent cross-links mediated by transglutaminase TGM2, between a glutamine and the epsilon-amino group of a lysine residue, forming homopolymers and heteropolymers.

It localises to the nucleus. The protein resides in the chromosome. The protein localises to the cytoplasm. It is found in the secreted. Its subcellular location is the cell membrane. It localises to the endosome. The protein resides in the endoplasmic reticulum-Golgi intermediate compartment. Its function is as follows. Multifunctional redox sensitive protein with various roles in different cellular compartments. In the nucleus is one of the major chromatin-associated non-histone proteins and acts as a DNA chaperone involved in replication, transcription, chromatin remodeling, V(D)J recombination, DNA repair and genome stability. Proposed to be an universal biosensor for nucleic acids. Promotes host inflammatory response to sterile and infectious signals and is involved in the coordination and integration of innate and adaptive immune responses. In the cytoplasm functions as a sensor and/or chaperone for immunogenic nucleic acids implicating the activation of TLR9-mediated immune responses, and mediates autophagy. Acts as a danger-associated molecular pattern (DAMP) molecule that amplifies immune responses during tissue injury. Released to the extracellular environment can bind DNA, nucleosomes, IL-1 beta, CXCL12, AGER isoform 2/sRAGE, lipopolysaccharide (LPS) and lipoteichoic acid (LTA), and activates cells through engagement of multiple surface receptors. In the extracellular compartment fully reduced HMGB1 (released by necrosis) acts as a chemokine, disulfide HMGB1 (actively secreted) as a cytokine, and sulfonyl HMGB1 (released from apoptotic cells) promotes immunological tolerance. Has proangiogenic activity. May be involved in platelet activation. Binds to phosphatidylserine and phosphatidylethanolamide. Bound to RAGE mediates signaling for neuronal outgrowth. May play a role in accumulation of expanded polyglutamine (polyQ) proteins. In terms of biological role, nuclear functions are attributed to fully reduced HGMB1. Associates with chromatin and binds DNA with a preference to non-canonical DNA structures such as single-stranded DNA, DNA-containing cruciforms or bent structures, supercoiled DNA and ZDNA. Can bent DNA and enhance DNA flexibility by looping thus providing a mechanism to promote activities on various gene promoters by enhancing transcription factor binding and/or bringing distant regulatory sequences into close proximity. May be involved in nucleotide excision repair (NER), mismatch repair (MMR) and base excision repair (BER) pathways, and double strand break repair such as non-homologous end joining (NHEJ). Involved in V(D)J recombination by acting as a cofactor of the RAG complex: acts by stimulating cleavage and RAG protein binding at the 23 bp spacer of conserved recombination signal sequences (RSS). In vitro can displace histone H1 from highly bent DNA. Can restructure the canonical nucleosome leading to relaxation of structural constraints for transcription factor-binding. Enhances binding of sterol regulatory element-binding proteins (SREBPs) such as SREBF1 to their cognate DNA sequences and increases their transcriptional activities. Facilitates binding of TP53 to DNA. May be involved in mitochondrial quality control and autophagy in a transcription-dependent fashion implicating HSPB1. Can modulate the activity of the telomerase complex and may be involved in telomere maintenance. In the cytoplasm proposed to dissociate the BECN1:BCL2 complex via competitive interaction with BECN1 leading to autophagy activation. Can protect BECN1 and ATG5 from calpain-mediated cleavage and thus proposed to control their proautophagic and proapoptotic functions and to regulate the extent and severity of inflammation-associated cellular injury. In myeloid cells has a protective role against endotoxemia and bacterial infection by promoting autophagy. Involved in endosomal translocation and activation of TLR9 in response to CpG-DNA in macrophages. Functionally, in the extracellular compartment (following either active secretion or passive release) involved in regulation of the inflammatory response. Fully reduced HGMB1 (which subsequently gets oxidized after release) in association with CXCL12 mediates the recruitment of inflammatory cells during the initial phase of tissue injury; the CXCL12:HMGB1 complex triggers CXCR4 homodimerization. Induces the migration of monocyte-derived immature dendritic cells and seems to regulate adhesive and migratory functions of neutrophils implicating AGER/RAGE and ITGAM. Can bind to various types of DNA and RNA including microbial unmethylated CpG-DNA to enhance the innate immune response to nucleic acids. Proposed to act in promiscuous DNA/RNA sensing which cooperates with subsequent discriminative sensing by specific pattern recognition receptors. Promotes extracellular DNA-induced AIM2 inflammasome activation implicating AGER/RAGE. Disulfide HMGB1 binds to transmembrane receptors, such as AGER/RAGE, TLR2, TLR4 and probably TREM1, thus activating their signal transduction pathways. Mediates the release of cytokines/chemokines such as TNF, IL-1, IL-6, IL-8, CCL2, CCL3, CCL4 and CXCL10. Promotes secretion of interferon-gamma by macrophage-stimulated natural killer (NK) cells in concert with other cytokines like IL-2 or IL-12. TLR4 is proposed to be the primary receptor promoting macrophage activation and signaling through TLR4 seems to implicate LY96/MD-2. In bacterial LPS- or LTA-mediated inflammatory responses binds to the endotoxins and transfers them to CD14 for signaling to the respective TLR4:LY96 and TLR2 complexes. Contributes to tumor proliferation by association with ACER/RAGE. Can bind to IL1-beta and signals through the IL1R1:IL1RAP receptor complex. Binding to class A CpG activates cytokine production in plasmacytoid dendritic cells implicating TLR9, MYD88 and AGER/RAGE and can activate autoreactive B cells. Via HMGB1-containing chromatin immune complexes may also promote B cell responses to endogenous TLR9 ligands through a B-cell receptor (BCR)-dependent and ACER/RAGE-independent mechanism. Inhibits phagocytosis of apoptotic cells by macrophages; the function is dependent on poly-ADP-ribosylation and involves binding to phosphatidylserine on the cell surface of apoptotic cells. In adaptive immunity may be involved in enhancing immunity through activation of effector T-cells and suppression of regulatory T (TReg) cells. In contrast, without implicating effector or regulatory T-cells, required for tumor infiltration and activation of T-cells expressing the lymphotoxin LTA:LTB heterotrimer thus promoting tumor malignant progression. Also reported to limit proliferation of T-cells. Released HMGB1:nucleosome complexes formed during apoptosis can signal through TLR2 to induce cytokine production. Involved in induction of immunological tolerance by apoptotic cells; its pro-inflammatory activities when released by apoptotic cells are neutralized by reactive oxygen species (ROS)-dependent oxidation specifically on Cys-106. During macrophage activation by activated lymphocyte-derived self apoptotic DNA (ALD-DNA) promotes recruitment of ALD-DNA to endosomes. This Cricetulus griseus (Chinese hamster) protein is High mobility group protein B1 (HMGB1).